A 150-amino-acid polypeptide reads, in one-letter code: Cell division protein SepF (150 aa).

This sequence belongs to the SepF family. In terms of assembly, homodimer. Interacts with FtsZ.

It is found in the cytoplasm. Functionally, cell division protein that is part of the divisome complex and is recruited early to the Z-ring. Probably stimulates Z-ring formation, perhaps through the cross-linking of FtsZ protofilaments. Its function overlaps with FtsA. The chain is Cell division protein SepF from Clostridium beijerinckii (strain ATCC 51743 / NCIMB 8052) (Clostridium acetobutylicum).